A 327-amino-acid chain; its full sequence is Protein-L-isoaspartate O-methyltransferase (327 aa).

Disordered regions lie at residues 1–38 (MSGE…DAAR) and 62–105 (PRAA…KSAT). Residues 14-29 (EDLKREPRKPEGRAAE) are compositionally biased toward basic and acidic residues. Positions 62-77 (PRAAGASGSGVPVAKP) are enriched in low complexity. The span at 92 to 105 (APSSGVKNGDKSAT) shows a compositional bias: polar residues. The active site involves S175.

It belongs to the methyltransferase superfamily. L-isoaspartyl/D-aspartyl protein methyltransferase family.

It localises to the cytoplasm. It carries out the reaction [protein]-L-isoaspartate + S-adenosyl-L-methionine = [protein]-L-isoaspartate alpha-methyl ester + S-adenosyl-L-homocysteine. Catalyzes the methyl esterification of L-isoaspartyl residues in peptides and proteins that result from spontaneous decomposition of normal L-aspartyl and L-asparaginyl residues. It plays a role in the repair and/or degradation of damaged proteins. In Burkholderia thailandensis (strain ATCC 700388 / DSM 13276 / CCUG 48851 / CIP 106301 / E264), this protein is Protein-L-isoaspartate O-methyltransferase.